The primary structure comprises 2752 residues: Serine/arginine repetitive matrix protein 2 (2752 aa).

An N-acetylmethionine modification is found at methionine 1. Positions 60–92 (HERKRRVELRCLELEEMMEEQGYEEQQIQEKVA) form a coiled coil. Residue lysine 101 is modified to N6-acetyllysine. Glycyl lysine isopeptide (Lys-Gly) (interchain with G-Cter in SUMO2) cross-links involve residues lysine 108 and lysine 130. The tract at residues 141-2131 (ISDSYVDGSS…MSPTPLDRCR (1991 aa)) is disordered. Phosphotyrosine is present on tyrosine 145. Lysine 169 carries the N6-acetyllysine modification. The segment covering 175-185 (RESSSSRSPTP) has biased composition (low complexity). 2 stretches are compositionally biased toward basic residues: residues 186-197 (KQKKKKKKKDRG) and 207-249 (RERK…KRSR). Positions 197–259 (GRRSESSSPR…STTPAPKSRR (63 aa)) are sufficient for RNA-binding. Phosphoserine is present on residues serine 220 and serine 222. Residues 263 to 290 (STSADSASSSDTSRSRSRSAAAKTHTTA) are compositionally biased toward low complexity. At threonine 286 the chain carries Phosphothreonine. A phosphoserine mark is found at serine 295, serine 297, serine 300, serine 322, and serine 323. Residues 313 to 333 (PGTTSTQRPSSPETATKQPSS) are compositionally biased toward polar residues. The span at 335–347 (YEDKDKDKKEKSA) shows a compositional bias: basic and acidic residues. The segment covering 348-360 (TRPSPSPERSSTG) has biased composition (low complexity). Residues serine 351, serine 353, serine 357, and serine 358 each carry the phosphoserine modification. Phosphothreonine occurs at positions 359 and 367. Serine 377 is modified (phosphoserine). The span at 380-398 (PLATTPLSQEPVNPPSEAS) shows a compositional bias: polar residues. Residues threonine 383 and threonine 384 each carry the phosphothreonine modification. Phosphoserine is present on residues serine 387, serine 395, serine 398, serine 404, and serine 408. The span at 399 to 410 (PTRDRSPPKSPE) shows a compositional bias: basic and acidic residues. Residues 411-421 (KLPQSSSSESS) show a composition bias toward low complexity. Phosphoserine is present on residues serine 424, serine 435, serine 436, serine 437, serine 440, and serine 454. Positions 461-483 (NRSHGRAKRDKSHSHTPSRRMGR) are enriched in basic residues. Residues serine 484, serine 486, serine 506, serine 508, serine 510, serine 534, serine 536, and serine 543 each carry the phosphoserine modification. The segment covering 491 to 536 (KRGRSRSRTPTKRGHSRSRSPQWRRSRSAQRWGRSRSPQRRGRSRS) has biased composition (basic residues). Over residues 537-546 (PQRPGWSRSR) the composition is skewed to low complexity. Basic residues-rich tracts occupy residues 547–564 (NTQRRGRSRSARRGRSHS), 571–723 (GRSR…RRGR), and 732–742 (NKSRTSQRRSR). Serine 702, serine 704, and serine 706 each carry phosphoserine. Phosphoserine occurs at positions 778, 780, and 783. Over residues 790–805 (SQTPPRRSRSGSSQPK) the composition is skewed to low complexity. The span at 806–816 (AKSRTPPRRSR) shows a compositional bias: basic residues. Residues 828 to 841 (KTPSRQSHSSSSPH) show a composition bias toward low complexity. 2 positions are modified to phosphoserine: serine 846 and serine 854. Over residues 849 to 869 (PPRQGSITSPQANEQSVTPQR) the composition is skewed to polar residues. Threonine 856 carries the post-translational modification Phosphothreonine. Phosphoserine occurs at positions 857 and 864. Threonine 866 is subject to Phosphothreonine. Residues serine 871, serine 875, serine 876, serine 908, serine 935, serine 950, serine 952, serine 954, serine 957, serine 968, serine 970, serine 972, serine 973, and serine 974 each carry the phosphoserine modification. Composition is skewed to low complexity over residues 901 to 917 (SSTPPRQSPSRSSSPQP) and 924 to 945 (SPRQRSHSGSSSPSPSRVTSRT). Threonine 977 and threonine 983 each carry phosphothreonine. Residues serine 992 and serine 994 each carry the phosphoserine modification. Tyrosine 996 carries the post-translational modification Phosphotyrosine. Residue threonine 1003 is modified to Phosphothreonine. Low complexity predominate over residues 1008-1017 (SLSGSKSPCP). Serine 1010, serine 1014, serine 1024, serine 1028, serine 1032, and serine 1042 each carry phosphoserine. The span at 1040 to 1064 (KSSTPPGESYFGVSSLQLKGQSQTS) shows a compositional bias: polar residues. Residue threonine 1043 is modified to Phosphothreonine. The residue at position 1049 (tyrosine 1049) is a Phosphotyrosine. Phosphoserine is present on residues serine 1064, serine 1069, serine 1072, serine 1073, serine 1083, serine 1099, serine 1101, serine 1102, and serine 1103. The span at 1071 to 1092 (TSSPEVRQSHSESPSLQSKSQT) shows a compositional bias: polar residues. Residues 1093 to 1104 (SPKGGRSRSSSP) show a composition bias toward low complexity. At threonine 1106 the chain carries Phosphothreonine. 9 positions are modified to phosphoserine: serine 1112, serine 1122, serine 1124, serine 1129, serine 1132, serine 1152, serine 1179, serine 1188, and serine 1198. Residues 1132 to 1159 (SPEQSRFQSDSSSYPTVDSNSLLGQSRL) show a composition bias toward polar residues. The span at 1204–1214 (DTLRTPPRERS) shows a compositional bias: basic and acidic residues. Threonine 1208 is modified (phosphothreonine). Serine 1214, serine 1219, serine 1227, serine 1254, serine 1257, serine 1258, serine 1266, serine 1270, and serine 1271 each carry phosphoserine. Residues 1216-1233 (AGSSPETKEQNSALPTSS) are compositionally biased toward polar residues. Polar residues predominate over residues 1283-1292 (TLDQSQSQAS). Phosphoserine is present on residues serine 1311, serine 1318, serine 1320, serine 1326, serine 1329, serine 1336, serine 1348, serine 1368, serine 1382, serine 1383, serine 1384, serine 1387, serine 1401, serine 1403, and serine 1404. Over residues 1318–1328 (SNSPLRENSFG) the composition is skewed to polar residues. Polar residues predominate over residues 1376–1386 (TRSSGHSSSEL). Threonine 1413 is subject to Phosphothreonine. Residues serine 1415, serine 1421, serine 1423, and serine 1424 each carry the phosphoserine modification. A Phosphothreonine modification is found at threonine 1434. Residues 1441–1452 (SGSSPGLRDGSG) are compositionally biased toward low complexity. Phosphoserine is present on residues serine 1444 and serine 1451. A Phosphothreonine modification is found at threonine 1453. Positions 1453-1463 (TPSRHSLSGSS) are enriched in polar residues. Residues serine 1458, serine 1460, serine 1462, and serine 1463 each carry the phosphoserine modification. At threonine 1472 the chain carries Phosphothreonine. 2 positions are modified to phosphoserine: serine 1482 and serine 1483. Threonine 1492 carries the phosphothreonine modification. A phosphoserine mark is found at serine 1497, serine 1499, serine 1501, and serine 1502. Residue threonine 1511 is modified to Phosphothreonine. Phosphoserine is present on residues serine 1517, serine 1519, serine 1521, and serine 1522. Residue threonine 1531 is modified to Phosphothreonine. Polar residues predominate over residues 1534 to 1544 (GQRSRSGSSQE). A phosphoserine mark is found at serine 1537, serine 1539, serine 1541, serine 1542, and serine 1552. Over residues 1555-1567 (ERSESDSSPDSKA) the composition is skewed to basic and acidic residues. A compositionally biased stretch (basic residues) spans 1568–1577 (KTRTPLRQRS). Phosphoserine is present on residues serine 1577, serine 1579, serine 1581, serine 1582, serine 1598, serine 1600, serine 1601, serine 1616, serine 1620, serine 1621, serine 1648, serine 1658, serine 1691, serine 1693, and serine 1694. Low complexity predominate over residues 1638–1657 (SGSSSKGRGPSPEGSSSTES). Basic residues predominate over residues 1681–1691 (KSRTPPRRRSS). Threonine 1698 bears the Phosphothreonine mark. Residues serine 1727, serine 1729, serine 1731, serine 1732, serine 1762, and serine 1764 each carry the phosphoserine modification. Basic residues-rich tracts occupy residues 1769–1789 (GLQRSRSRSRREKTRTTRRRD) and 1798–1816 (SRRRQRSRSRSRVTRRRRG). Serine 1818, serine 1822, serine 1854, serine 1857, serine 1876, and serine 1878 each carry phosphoserine. A compositionally biased stretch (basic residues) spans 1834–1854 (SSRRRRGRSRTPPTSRKRSRS). Positions 1862–2068 (KRSRSRASPA…PRTARGKRSL (207 aa)) are enriched in basic residues. A Phosphothreonine modification is found at threonine 1880. Residues serine 1884 and serine 1890 each carry the phosphoserine modification. The residue at position 1892 (threonine 1892) is a Phosphothreonine. Phosphoserine is present on residues serine 1893, serine 1916, serine 1919, serine 1923, and serine 1925. 2 positions are modified to phosphothreonine: threonine 1927 and threonine 1931. A phosphoserine mark is found at serine 1946 and serine 1948. Phosphothreonine is present on residues threonine 1950 and threonine 1954. A phosphoserine mark is found at serine 1958 and serine 1960. 2 positions are modified to phosphothreonine: threonine 1962 and threonine 1966. Phosphoserine occurs at positions 1970, 1972, and 1975. Threonine 1978 is subject to Phosphothreonine. Residues serine 1984, serine 1987, serine 1996, serine 1999, serine 2008, serine 2011, serine 2018, and serine 2020 each carry the phosphoserine modification. Phosphothreonine is present on threonine 2022. Residues serine 2030 and serine 2032 each carry the phosphoserine modification. Residue threonine 2034 is modified to Phosphothreonine. Residues serine 2042, serine 2044, serine 2046, and serine 2067 each carry the phosphoserine modification. Threonine 2069 carries the phosphothreonine modification. Residues 2070–2095 (RSPPAIRRRSASGSSSDRSRSATPPA) are compositionally biased toward low complexity. A phosphoserine mark is found at serine 2071 and serine 2090. Threonine 2092 carries the post-translational modification Phosphothreonine. The span at 2097–2124 (RNHSGSRTPPVALNSSRMSCFSRPSMSP) shows a compositional bias: polar residues. Serine 2100 and serine 2102 each carry phosphoserine. Position 2104 is a phosphothreonine (threonine 2104). Residues serine 2118, serine 2121, serine 2123, and serine 2132 each carry the phosphoserine modification. Threonine 2144 is subject to Phosphothreonine. 4 positions are modified to omega-N-methylarginine: arginine 2194, arginine 2207, arginine 2231, and arginine 2246. Serine 2272 carries the post-translational modification Phosphoserine. Arginine 2274 and arginine 2288 each carry omega-N-methylarginine. A phosphothreonine mark is found at threonine 2289, threonine 2291, and threonine 2302. A Phosphoserine modification is found at serine 2310. The interval 2311–2342 (LTGSGTPPTAANYPSSSRTPQAPASANLVGPR) is disordered. Residues threonine 2316 and threonine 2329 each carry the phosphothreonine modification. The segment covering 2317 to 2334 (PPTAANYPSSSRTPQAPA) has biased composition (polar residues). A Phosphoserine modification is found at serine 2335. Residue arginine 2342 is modified to Omega-N-methylarginine. Phosphoserine occurs at positions 2343, 2368, and 2376. At threonine 2381 the chain carries Phosphothreonine. The residue at position 2382 (serine 2382) is a Phosphoserine. Asymmetric dimethylarginine; alternate is present on arginine 2384. An Omega-N-methylarginine; alternate modification is found at arginine 2384. Residues 2389–2752 (AYERVSGRTS…PMRHRSSRSP (364 aa)) form a disordered region. A phosphoserine mark is found at serine 2394, serine 2398, and serine 2407. At threonine 2409 the chain carries Phosphothreonine. 6 positions are modified to phosphoserine: serine 2412, serine 2415, serine 2426, serine 2429, serine 2449, and serine 2453. A compositionally biased stretch (polar residues) spans 2426–2439 (SPSSRMGQAPSQSL). Residues 2455–2473 (FSDQSRCLIAQTTPVAGSQ) are compositionally biased toward polar residues. Low complexity-rich tracts occupy residues 2474–2487 (SLSSGAVATTTSSA), 2515–2526 (AQQPSALAALQP), and 2533–2567 (SSSSSSSSSSSSSSSSSSSSSSSSGSSSSDSEGSS). Serine 2581 carries the post-translational modification Phosphoserine. Threonine 2583 is modified (phosphothreonine). Lysine 2587 participates in a covalent cross-link: Glycyl lysine isopeptide (Lys-Gly) (interchain with G-Cter in SUMO2). Threonine 2599 is subject to Phosphothreonine. The span at 2608–2648 (SSSSSSSSSSSSSSSSSSSSSSSSSSSSSSSSSSSSSSSSS) shows a compositional bias: low complexity. A compositionally biased stretch (pro residues) spans 2651-2668 (PAKPGPQALPKPASPKKP). Serine 2664, serine 2675, serine 2677, serine 2684, serine 2688, serine 2690, serine 2692, serine 2694, serine 2702, and serine 2706 each carry phosphoserine. Basic and acidic residues predominate over residues 2669 to 2689 (PPGERRSRSPRKPIDSLRDSR). The span at 2707 to 2716 (PRDQQSSSSE) shows a compositional bias: low complexity. Basic and acidic residues predominate over residues 2717–2729 (RGSRRGQRGDSRS). A Phosphothreonine modification is found at threonine 2738. Phosphoserine is present on serine 2740. Over residues 2743-2752 (PMRHRSSRSP) the composition is skewed to basic residues.

The protein belongs to the CWC21 family. Component of pre-catalytic, catalytic and post-catalytic spliceosome complexes. Found in a pre-mRNA splicing complex with SFRS4, SFRS5, SNRP70, SNRPA1, SRRM1 and SRRM2. Component of the minor spliceosome, which splices U12-type introns. Interacts with DHX8. Interacts with CACTIN. In terms of tissue distribution, expressed in liver, placenta, and white blood cells.

Its subcellular location is the nucleus. The protein resides in the nucleus speckle. Functionally, required for pre-mRNA splicing as component of the spliceosome. As a component of the minor spliceosome, involved in the splicing of U12-type introns in pre-mRNAs. The chain is Serine/arginine repetitive matrix protein 2 (SRRM2) from Homo sapiens (Human).